A 1699-amino-acid chain; its full sequence is Hybrid signal transduction histidine kinase E (1699 aa).

Disordered stretches follow at residues 1 to 32 and 58 to 97; these read MDKLKINNNLSPPSSPSSSTTTPNLSSTNLEN and NNIIINNNNNNNNNNNNNNNNNNNNSNNNNNNINNNNPNV. The span at 7 to 32 shows a compositional bias: low complexity; that stretch reads NNNLSPPSSPSSSTTTPNLSSTNLEN. 6 helical membrane-spanning segments follow: residues 142–162, 164–184, 191–211, 238–258, 262–282, and 295–315; these read CILLGECGVYVFIYMFFLIFL, SFYPIFICGIVSMIVLYIVST, LVALIYIFVQSILNFTFFLQI, LNFLFIMNLILSLISIQIFFP, FSITLTCSLNIFNIIIHLISI, and NLIVPITVSFLLSFYSYILSI. Residues 412–432 are compositionally biased toward polar residues; that stretch reads ITNGGNNKQTSTTSANSTPRY. Disordered regions lie at residues 412–439 and 542–593; these read ITNGGNNKQTSTTSANSTPRYNNYNNNN and LLNN…NISN. Positions 544-593 are enriched in low complexity; it reads NNNNNNNNNNNNNNNNNNNNNNNNNNSNNNNNNNSNNNNNNNNINNNISN. One can recognise a Histidine kinase domain in the interval 678–950; the sequence is TVSHEVRTPI…AFSFTSILST (273 aa). Histidine 681 carries the post-translational modification Phosphohistidine; by autocatalysis. 5 disordered regions span residues 819-866, 1018-1054, 1186-1239, 1252-1294, and 1351-1406; these read NNNN…NNNN, NNNNNNNNNNNNNNNNNNNNNNNNDNNNNNNNNNDNN, KKQQ…RKSS, MVQV…NPNN, and SIPI…SPPP. Positions 1198–1212 are enriched in polar residues; it reads MGDTLSSTKSPQYTN. The span at 1219 to 1239 shows a compositional bias: low complexity; sequence SSSSNGSLNKSNRSNLLRKSS. Over residues 1271-1282 the composition is skewed to polar residues; sequence KGNNSNPNSTEL. Composition is skewed to low complexity over residues 1283 to 1294 and 1355 to 1392; these read NSTNSVNGNPNN and NINNNDNNNNNNNNNNNNNNNNNNNNNNNNNNNNNNNN. Residues 1575–1695 form the Response regulatory domain; the sequence is NALIVDDTEL…TLKDTLLKWG (121 aa). Aspartate 1625 is modified (4-aspartylphosphate).

The protein resides in the membrane. It catalyses the reaction ATP + protein L-histidine = ADP + protein N-phospho-L-histidine.. Functionally, may act in a signal transduction pathway. This protein undergoes an ATP-dependent autophosphorylation at a conserved histidine residue in the kinase core, and a phosphoryl group is then transferred to a conserved aspartate residue in the receiver domain. In Dictyostelium discoideum (Social amoeba), this protein is Hybrid signal transduction histidine kinase E (dhkE).